A 312-amino-acid chain; its full sequence is Methionyl-tRNA formyltransferase (312 aa).

112-115 (SLLP) provides a ligand contact to (6S)-5,6,7,8-tetrahydrofolate.

It belongs to the Fmt family.

It carries out the reaction L-methionyl-tRNA(fMet) + (6R)-10-formyltetrahydrofolate = N-formyl-L-methionyl-tRNA(fMet) + (6S)-5,6,7,8-tetrahydrofolate + H(+). Functionally, attaches a formyl group to the free amino group of methionyl-tRNA(fMet). The formyl group appears to play a dual role in the initiator identity of N-formylmethionyl-tRNA by promoting its recognition by IF2 and preventing the misappropriation of this tRNA by the elongation apparatus. This chain is Methionyl-tRNA formyltransferase, found in Syntrophus aciditrophicus (strain SB).